The chain runs to 230 residues: Inactive L-threonine 3-dehydrogenase, mitochondrial (230 aa).

The protein belongs to the NAD(P)-dependent epimerase/dehydratase family. In terms of tissue distribution, expressed in all tissues examined. Detected in most cell types examined, but not observed in endothelial cells, glioma cell lines and some leukemia cell lines.

It is found in the mitochondrion. The polypeptide is Inactive L-threonine 3-dehydrogenase, mitochondrial (Homo sapiens (Human)).